Here is a 391-residue protein sequence, read N- to C-terminus: Nicotinate phosphoribosyltransferase (391 aa).

At His-216 the chain carries Phosphohistidine; by autocatalysis.

It belongs to the NAPRTase family. Transiently phosphorylated on a His residue during the reaction cycle. Phosphorylation strongly increases the affinity for substrates and increases the rate of nicotinate D-ribonucleotide production. Dephosphorylation regenerates the low-affinity form of the enzyme, leading to product release.

It catalyses the reaction nicotinate + 5-phospho-alpha-D-ribose 1-diphosphate + ATP + H2O = nicotinate beta-D-ribonucleotide + ADP + phosphate + diphosphate. It participates in cofactor biosynthesis; NAD(+) biosynthesis; nicotinate D-ribonucleotide from nicotinate: step 1/1. In terms of biological role, catalyzes the synthesis of beta-nicotinate D-ribonucleotide from nicotinate and 5-phospho-D-ribose 1-phosphate at the expense of ATP. The sequence is that of Nicotinate phosphoribosyltransferase from Bordetella petrii (strain ATCC BAA-461 / DSM 12804 / CCUG 43448).